The primary structure comprises 574 residues: Septation ring formation regulator EzrA (574 aa).

The Extracellular segment spans residues 1–7 (MSSGIIL). Residues 8 to 26 (LIVAIVLLVIIAYLVGVII) traverse the membrane as a helical segment. Residues 27-574 (RKRNDTLITS…YEKTRERIRF (548 aa)) lie on the Cytoplasmic side of the membrane. Coiled-coil stretches lie at residues 102 to 131 (NFIR…REAL), 161 to 190 (ENED…FVAL), 276 to 379 (VTLD…QQEK), and 459 to 493 (QLEA…NLEE).

Belongs to the EzrA family.

It is found in the cell membrane. Negative regulator of FtsZ ring formation; modulates the frequency and position of FtsZ ring formation. Inhibits FtsZ ring formation at polar sites. Interacts either with FtsZ or with one of its binding partners to promote depolymerization. The polypeptide is Septation ring formation regulator EzrA (Streptococcus equi subsp. zooepidemicus (strain H70)).